The primary structure comprises 154 residues: Aspartate carbamoyltransferase regulatory chain (154 aa).

4 residues coordinate Zn(2+): cysteine 109, cysteine 114, cysteine 138, and cysteine 141.

The protein belongs to the PyrI family. As to quaternary structure, contains catalytic and regulatory chains. It depends on Zn(2+) as a cofactor.

Functionally, involved in allosteric regulation of aspartate carbamoyltransferase. The chain is Aspartate carbamoyltransferase regulatory chain from Methanothrix thermoacetophila (strain DSM 6194 / JCM 14653 / NBRC 101360 / PT) (Methanosaeta thermophila).